The following is a 141-amino-acid chain: Lutropin subunit beta (141 aa).

The N-terminal stretch at 1–21 (MERYQELTVLLLLLLLEGGSG) is a signal peptide. Disulfide bonds link cysteine 30–cysteine 78, cysteine 44–cysteine 93, cysteine 47–cysteine 131, cysteine 55–cysteine 109, cysteine 59–cysteine 111, and cysteine 114–cysteine 121. The N-linked (GlcNAc...) asparagine glycan is linked to asparagine 34.

This sequence belongs to the glycoprotein hormones subunit beta family. As to quaternary structure, heterodimer of a common alpha chain and a unique beta chain which confers biological specificity to thyrotropin, lutropin, follitropin and gonadotropin.

Its subcellular location is the secreted. In terms of biological role, promotes spermatogenesis and ovulation by stimulating the testes and ovaries to synthesize steroids. This Monodelphis domestica (Gray short-tailed opossum) protein is Lutropin subunit beta (LHB).